The following is a 196-amino-acid chain: Regulator of G-protein signaling 1 (196 aa).

Residues Met1–Lys27 are disordered. The span at Lys11 to Thr25 shows a compositional bias: basic and acidic residues. Positions Ser72 to Leu187 constitute an RGS domain.

Interacts with GNAI1 and GNAQ.

The protein resides in the cell membrane. The protein localises to the cytoplasm. It is found in the cytosol. Its function is as follows. Regulates G protein-coupled receptor signaling cascades, including signaling downstream of the N-formylpeptide chemoattractant receptors and leukotriene receptors. Inhibits B cell chemotaxis toward CXCL12. Inhibits signal transduction by increasing the GTPase activity of G protein alpha subunits, thereby driving them into their inactive GDP-bound form. This Equus caballus (Horse) protein is Regulator of G-protein signaling 1 (RGS1).